We begin with the raw amino-acid sequence, 269 residues long: Growth-regulating factor 11 (269 aa).

The segment covering 1–11 has biased composition (basic and acidic residues); the sequence is MAAEGEAKKDS. The tract at residues 1-71 is disordered; it reads MAAEGEAKKD…GKEDVEEGGV (71 aa). Residues 43–52 are compositionally biased toward gly residues; it reads GEAGGGGGGG. Residues 58–68 are compositionally biased toward acidic residues; that stretch reads EEEEGKEDVEE. In terms of domain architecture, QLQ spans 114-149; it reads AFTAMQLQELEQQSRVYQYMAARVPVPTHLVFPIWK. The WRC domain occupies 180–224; the sequence is EPEPGRCRRTDGKKWRCWRNAIANEKYCERHMHRGRKRPVQLVVE. 2 consecutive short sequence motifs (bipartite nuclear localization signal) follow at residues 185–195 and 213–217; these read RCRRTDGKKWR and RGRKR. The interval 212–269 is disordered; sequence HRGRKRPVQLVVEDDEPDSTSGSKPASGKATEGGKKTDDKSSSSKKLAVAAPAAVEST. Residues 243-253 are compositionally biased toward basic and acidic residues; the sequence is EGGKKTDDKSS. Positions 255–269 are enriched in low complexity; that stretch reads SKKLAVAAPAAVEST.

Belongs to the GRF family.

The protein resides in the nucleus. Functionally, transcription activator that plays a regulatory role in gibberellin-induced stem elongation. The sequence is that of Growth-regulating factor 11 (GRF11) from Oryza sativa subsp. japonica (Rice).